The chain runs to 485 residues: Glycogen synthase (485 aa).

Lys15 serves as a coordination point for ADP-alpha-D-glucose.

This sequence belongs to the glycosyltransferase 1 family. Bacterial/plant glycogen synthase subfamily.

It carries out the reaction [(1-&gt;4)-alpha-D-glucosyl](n) + ADP-alpha-D-glucose = [(1-&gt;4)-alpha-D-glucosyl](n+1) + ADP + H(+). It functions in the pathway glycan biosynthesis; glycogen biosynthesis. Its function is as follows. Synthesizes alpha-1,4-glucan chains using ADP-glucose. The chain is Glycogen synthase from Fervidobacterium nodosum (strain ATCC 35602 / DSM 5306 / Rt17-B1).